We begin with the raw amino-acid sequence, 433 residues long: Isocitrate dehydrogenase [NADP], chloroplastic (433 aa).

The N-terminal 21 residues, 1–21 (QFSPNLSFSAFFPIITFTTAT), are a transit peptide targeting the chloroplast. Residues 98-100 (TIT) and R105 contribute to the NADP(+) site. Substrate is bound at residue T100. Substrate-binding positions include 117–123 (SPNGTIR), R132, and R155. D275 is a Mn(2+) binding site. Residue K283 coordinates NADP(+). Mn(2+) is bound at residue D298. NADP(+)-binding positions include 333–338 (GTVTRH) and N351.

This sequence belongs to the isocitrate and isopropylmalate dehydrogenases family. Mg(2+) serves as cofactor. Mn(2+) is required as a cofactor. Detected in all tissues examined.

Its subcellular location is the plastid. It is found in the chloroplast. The catalysed reaction is D-threo-isocitrate + NADP(+) = 2-oxoglutarate + CO2 + NADPH. The sequence is that of Isocitrate dehydrogenase [NADP], chloroplastic from Medicago sativa (Alfalfa).